The primary structure comprises 862 residues: DNA topoisomerase 3-beta-1 (862 aa).

The Toprim domain occupies 3 to 153 (TVLMVAEKPS…EKTVFRARFS (151 aa)). One can recognise a Topo IA-type catalytic domain in the interval 171 to 593 (DHNEALSVDA…HTLDIFKRKF (423 aa)). Residue Tyr-336 is the O-(5'-phospho-DNA)-tyrosine intermediate of the active site. The segment at 820 to 855 (HPMHRGGPGRRQGRGRGRGRRPPGKPNPRRPKDKMS) is disordered. A compositionally biased stretch (basic residues) spans 821–851 (PMHRGGPGRRQGRGRGRGRRPPGKPNPRRPK).

Belongs to the type IA topoisomerase family. As to expression, highly expressed in testis.

The catalysed reaction is ATP-independent breakage of single-stranded DNA, followed by passage and rejoining.. In terms of biological role, releases the supercoiling and torsional tension of DNA introduced during the DNA replication and transcription by transiently cleaving and rejoining one strand of the DNA duplex. Introduces a single-strand break via transesterification at a target site in duplex DNA. The scissile phosphodiester is attacked by the catalytic tyrosine of the enzyme, resulting in the formation of a DNA-(5'-phosphotyrosyl)-enzyme intermediate and the expulsion of a 3'-OH DNA strand. The free DNA strand than undergoes passage around the unbroken strand thus removing DNA supercoils. Finally, in the religation step, the DNA 3'-OH attacks the covalent intermediate to expel the active-site tyrosine and restore the DNA phosphodiester backbone. Possesses negatively supercoiled DNA relaxing activity. The protein is DNA topoisomerase 3-beta-1 (Top3b) of Mus musculus (Mouse).